The chain runs to 307 residues: Probable transposase for transposon Tn903 (307 aa).

Its function is as follows. Required for transposition of transposon Tn903. This chain is Probable transposase for transposon Tn903, found in Escherichia coli.